We begin with the raw amino-acid sequence, 299 residues long: MASLKDLRSRITSVKSTQKITSAMKMVAASRLRRAQDTAEAARPYTQRMERMLGNLAASTAGMAGASPLLGGTGKDNVHLIVALTANRGLCGGFNGSIIRATRTLVRELEAQGKTVKLLCIGKKGRDGLKREFPKQIIGGIADQSSKAIGFSDADRFSRLILDMFQAGEFDVCTLVYNRFQSAISQVVTRQQIIPFAVPTTVAAGNDNDRTAGPKAIYEYEPSEEEILADLLPKNVAIQVFRGMLESFASEQGARMTAMDNATRNAGDMIKKLSLTYNRTRQAQITKELIEIISGAEAI.

The protein belongs to the ATPase gamma chain family. F-type ATPases have 2 components, CF(1) - the catalytic core - and CF(0) - the membrane proton channel. CF(1) has five subunits: alpha(3), beta(3), gamma(1), delta(1), epsilon(1). CF(0) has three main subunits: a, b and c.

It localises to the cell inner membrane. In terms of biological role, produces ATP from ADP in the presence of a proton gradient across the membrane. The gamma chain is believed to be important in regulating ATPase activity and the flow of protons through the CF(0) complex. The sequence is that of ATP synthase gamma chain from Rhodospirillum rubrum.